Reading from the N-terminus, the 43-residue chain is DeltaKappa-actitoxin-Avd4b (43 aa).

Intrachain disulfides connect C4–C39, C6–C32, and C22–C40.

It belongs to the sea anemone type 3 (BDS) potassium channel toxin family.

Its subcellular location is the secreted. It localises to the nematocyst. Functionally, acts as a gating modifier on both Kv and Nav ion channels. Voltage-dependently inhibits voltage-gated potassium channels Kv3 (Kv3.1/KCNC1, Kv3.2/KCNC2 and Kv3.4/KCNC4). Slows inactivation of the voltage-gated sodium channel Nav1.7/SCN9A. Inhibits all Kv3.1, Kv3.2 and Kv3.4 by about 50% when tested at a voltage of +40 mV. May act by binding residues in voltage-sensing domains S3b and S4 of Kv3. Tests have been done on human Nav1.7/SCN9A and rat SCG neurons that mostly carry Nav1.7 channels (EC(50)=300 nM). This toxin also reduces blood pressure. This Anemonia sulcata (Mediterranean snakelocks sea anemone) protein is DeltaKappa-actitoxin-Avd4b.